A 609-amino-acid polypeptide reads, in one-letter code: MSNEFNAQSFLRTVSSSAGVYRMYDVKNDVIYVGKAKDLKKRLTSYFRKNLANVKTQALVSHIHHINVTLTHSETDALLLENDYIKQYMPKYNVLLRDDKSYPYILLSQHEHPRLAYHRGPQREKGHYFGPYPNGGAVRESLHLMQKLFPIRQCDDLYYKSRSRPCLQYQLSRCSAPCVGKVSNADYDEQVKLASLFLKGKDQQVISALVDKMELAAERQAYEQAARFRDQIMALRKVAEQQEVSNNKGDMDVIGVHYSSGIACFHLLFIREGKIFGSRSYYPSVPAQTDMDEVLRSFILQFYLNADIQRTIPKEVVISHNFEELHELEAAVSEALDKKFSIKTNVRADRASFLRLAVTNATNAVVTRLSHKNTVEQRFVLLEEILELSTPIQRMECFDISHTMGESTVASCVVFNREGPHKGEYRRYNIEGITPGDDYAAMKQAVSRRFDKIEAGGKIPDILFIDGGLGQLRIAQKIVDEKFVHLDKAPQLIGVAKGEGRKPGLETLILGDTETSFSLEGDSPALHLIQHIRDESHRFAIAGHRNRRQKTRNTSTLESIPGIGPKRRKALLQHLGGLQEVKGASVAELVKVPGISIEMAQTIHDALRG.

Positions 16–94 (SSAGVYRMYD…IKQYMPKYNV (79 aa)) constitute a GIY-YIG domain. In terms of domain architecture, UVR spans 203-238 (QQVISALVDKMELAAERQAYEQAARFRDQIMALRKV).

This sequence belongs to the UvrC family. In terms of assembly, interacts with UvrB in an incision complex.

Its subcellular location is the cytoplasm. In terms of biological role, the UvrABC repair system catalyzes the recognition and processing of DNA lesions. UvrC both incises the 5' and 3' sides of the lesion. The N-terminal half is responsible for the 3' incision and the C-terminal half is responsible for the 5' incision. The protein is UvrABC system protein C of Shewanella baltica (strain OS155 / ATCC BAA-1091).